A 199-amino-acid chain; its full sequence is Elongation factor Ts (199 aa).

The tract at residues 81–84 (TDFV) is involved in Mg(2+) ion dislocation from EF-Tu.

This sequence belongs to the EF-Ts family.

Its subcellular location is the cytoplasm. Its function is as follows. Associates with the EF-Tu.GDP complex and induces the exchange of GDP to GTP. It remains bound to the aminoacyl-tRNA.EF-Tu.GTP complex up to the GTP hydrolysis stage on the ribosome. This Thermotoga sp. (strain RQ2) protein is Elongation factor Ts.